Here is a 142-residue protein sequence, read N- to C-terminus: Large ribosomal subunit protein uL13 (142 aa).

It belongs to the universal ribosomal protein uL13 family. Part of the 50S ribosomal subunit.

In terms of biological role, this protein is one of the early assembly proteins of the 50S ribosomal subunit, although it is not seen to bind rRNA by itself. It is important during the early stages of 50S assembly. The chain is Large ribosomal subunit protein uL13 from Coxiella burnetii (strain CbuK_Q154) (Coxiella burnetii (strain Q154)).